The primary structure comprises 2472 residues: Telomere-associated protein RIF1 (2472 aa).

The disordered stretch occupies residues 1–25; the sequence is MTARGQSPLAPLLETLEDPSASHGG. A Phosphoserine modification is found at Ser-402. Thr-409 carries the phosphothreonine modification. A phosphoserine mark is found at Ser-782, Ser-979, and Ser-1008. The residue at position 1047 (Thr-1047) is a Phosphothreonine. The tract at residues 1145–1192 is disordered; the sequence is LEKSSLSNNECGSLDKTSPEMSNSNNDERKKALISSRKTSTECASSTE. Over residues 1148 to 1169 the composition is skewed to polar residues; the sequence is SSLSNNECGSLDKTSPEMSNSN. Ser-1162 is modified (phosphoserine). Thr-1220 carries the post-translational modification Phosphothreonine. Ser-1236 and Ser-1238 each carry phosphoserine. Basic and acidic residues-rich tracts occupy residues 1265–1279 and 1306–1315; these read AKQR…DSEK and MRSEPEKNTE. Disordered stretches follow at residues 1265-1318, 1398-1464, and 1479-1587; these read AKQR…EESV, MVNE…DVLP, and IEKG…DQEE. A compositionally biased stretch (polar residues) spans 1400–1412; the sequence is NEDSQVQITPNQK. Ser-1422, Ser-1454, and Ser-1513 each carry phosphoserine. Composition is skewed to basic and acidic residues over residues 1431-1464 and 1500-1530; these read SQDK…DVLP and EQNK…EKLV. Thr-1518 is modified (phosphothreonine). Phosphoserine occurs at positions 1542, 1552, 1554, 1556, and 1564. The segment covering 1565-1574 has biased composition (basic residues); it reads RKKRSGKWKN. Phosphoserine occurs at positions 1576, 1579, 1613, 1616, 1688, 1693, 1706, and 1709. Residues 1762 to 1782 are disordered; it reads TKKADVQAPVSPSETSQANPY. Residues 1771–1782 show a composition bias toward polar residues; it reads VSPSETSQANPY. Position 1806 is a phosphothreonine (Thr-1806). At Ser-1810 the chain carries Phosphoserine. Polar residues predominate over residues 1846-1859; sequence AMSLESQESPNENF. The disordered stretch occupies residues 1846 to 1889; it reads AMSLESQESPNENFKTVGPCLGDSKNVSQESLETKEEKPEETPK. Phosphoserine occurs at positions 1873 and 1876. Over residues 1877 to 1889 the composition is skewed to basic and acidic residues; that stretch reads LETKEEKPEETPK. The tract at residues 1924 to 2472 is interaction with condensed chromosomes in telophase; the sequence is EASFHGQERT…WRSPSHENSI (549 aa). Residues Ser-1926 and Ser-1971 each carry the phosphoserine modification. Positions 1992–2021 are disordered; that stretch reads EQTAAGELDGGNDVSDLHSSEETNTKMKNN. Residues 2006–2021 are compositionally biased toward basic and acidic residues; that stretch reads SDLHSSEETNTKMKNN. Ser-2144 and Ser-2161 each carry phosphoserine. A Phosphothreonine modification is found at Thr-2167. An interaction with ERCC6 region spans residues 2170–2446; the sequence is VWSPLASPST…SGSQLFEMHE (277 aa). Phosphoserine occurs at positions 2172, 2176, 2195, 2196, and 2205. A compositionally biased stretch (polar residues) spans 2227-2255; that stretch reads RSHSSNSSPIGKSVKTSPTTQSKHNTTSA. The tract at residues 2227-2269 is disordered; sequence RSHSSNSSPIGKSVKTSPTTQSKHNTTSAKGFLSPGSRSPKFK. Phosphoserine is present on residues Ser-2260, Ser-2339, Ser-2391, Ser-2393, Ser-2465, and Ser-2471.

This sequence belongs to the RIF1 family. In terms of assembly, interacts with TP53BP1 (when phosphorylated by ATM). May interact with TRF2. Interacts with SHLD2. Interacts with ERCC6 (via WHD region). Interacts with ASTE1. In terms of tissue distribution, highly expressed in testis.

Its subcellular location is the nucleus. The protein resides in the chromosome. The protein localises to the telomere. It is found in the cytoplasm. It localises to the cytoskeleton. Its subcellular location is the spindle. In terms of biological role, key regulator of TP53BP1 that plays a key role in the repair of double-strand DNA breaks (DSBs) in response to DNA damage: acts by promoting non-homologous end joining (NHEJ)-mediated repair of DSBs. In response to DNA damage, interacts with ATM-phosphorylated TP53BP1. Interaction with TP53BP1 leads to dissociate the interaction between NUDT16L1/TIRR and TP53BP1, thereby unmasking the tandem Tudor-like domain of TP53BP1 and allowing recruitment to DNA DSBs. Once recruited to DSBs, RIF1 and TP53BP1 act by promoting NHEJ-mediated repair of DSBs. In the same time, RIF1 and TP53BP1 specifically counteract the function of BRCA1 by blocking DSBs resection via homologous recombination (HR) during G1 phase. Also required for immunoglobulin class-switch recombination (CSR) during antibody genesis, a process that involves the generation of DNA DSBs. Promotes NHEJ of dysfunctional telomeres. The sequence is that of Telomere-associated protein RIF1 from Homo sapiens (Human).